Reading from the N-terminus, the 518-residue chain is Phytoene desaturase (neurosporene-forming) (518 aa).

14–47 provides a ligand contact to FAD; it reads LVIGSGLGGLAAAMRLGAKGWRVTVIDKLDVPGG.

Belongs to the carotenoid/retinoid oxidoreductase family. The cofactor is FAD.

It carries out the reaction 15-cis-phytoene + 3 A = all-trans-neurosporene + 3 AH2. It participates in carotenoid biosynthesis. Converts phytoene into all-trans-neurosporene as the major product, via the intermediary of phytofluene and zeta-carotene, by the introduction of three double bonds. This is Phytoene desaturase (neurosporene-forming) (crtI) from Cereibacter sphaeroides (strain ATCC 17023 / DSM 158 / JCM 6121 / CCUG 31486 / LMG 2827 / NBRC 12203 / NCIMB 8253 / ATH 2.4.1.) (Rhodobacter sphaeroides).